Consider the following 552-residue polypeptide: Hyaluronan synthase 2 (552 aa).

Topologically, residues 1-11 are cytoplasmic; the sequence is MYCERFICILR. Residues 12–32 form a helical membrane-spanning segment; the sequence is ILGTTLFGVSLLLGITAAYIV. Residues 33–45 are Extracellular-facing; that stretch reads GYQFIQTDNYYFS. Residues 46–66 form a helical membrane-spanning segment; the sequence is FGLYGAILASHLIIQSLFAYL. Over 67–374 the chain is Cytoplasmic; it reads EHRKMKRSLE…NAMWFHKHHL (308 aa). A helical transmembrane segment spans residues 375–395; it reads WMTYEAVITGFFPFFLIATVI. The Extracellular portion of the chain corresponds to 396-402; sequence QLFYRGK. A helical membrane pass occupies residues 403-423; that stretch reads IWNILLFLLTVQLVGLIKSSF. At 424–429 the chain is on the cytoplasmic side; it reads ASFLRG. Residues 430–450 traverse the membrane as a helical segment; it reads NIVMVFMSLYSVLYMSSLLPA. Topologically, residues 451-475 are extracellular; the sequence is KMFAIATINKAGWGTSGRKTIVVNF. A helical transmembrane segment spans residues 476–496; sequence IGLIPVSIWFTILLGRVIFTI. At 497-510 the chain is on the cytoplasmic side; it reads YKESKKPFSESKTT. The chain crosses the membrane as a helical span at residues 511-531; that stretch reads VLVIGTILYACYWVLLLTLYL. Residues 532-552 lie on the Extracellular side of the membrane; that stretch reads VLITKCGRRKKEQHYDMVLDV.

This sequence belongs to the NodC/HAS family. In terms of assembly, homodimer; dimerization promotes enzymatic activity. Requires Mg(2+) as cofactor.

Its subcellular location is the cell membrane. It is found in the endoplasmic reticulum membrane. The protein resides in the vesicle. It localises to the golgi apparatus membrane. The protein localises to the lysosome. It carries out the reaction [hyaluronan](n) + UDP-N-acetyl-alpha-D-glucosamine = N-acetyl-beta-D-glucosaminyl-(1-&gt;4)-[hyaluronan](n) + UDP + H(+). It catalyses the reaction N-acetyl-beta-D-glucosaminyl-(1-&gt;4)-[hyaluronan](n) + UDP-alpha-D-glucuronate = [hyaluronan](n+1) + UDP + H(+). Its pathway is glycan biosynthesis; hyaluronan biosynthesis. In terms of biological role, catalyzes the addition of GlcNAc or GlcUA monosaccharides to the nascent hyaluronan polymer. Therefore, it is essential to hyaluronan synthesis a major component of most extracellular matrices that has a structural role in tissues architectures and regulates cell adhesion, migration and differentiation. This is one of three isoenzymes responsible for cellular hyaluronan synthesis and it is particularly responsible for the synthesis of high molecular mass hyaluronan. The chain is Hyaluronan synthase 2 (HAS2) from Gallus gallus (Chicken).